An 881-amino-acid chain; its full sequence is Glutamate--tRNA ligase (881 aa).

The segment at 1 to 480 is glutamyl-tRNA synthetase; the sequence is MSVRVRLAPS…ILRFKKSIGQ (480 aa). The 'HIGH' region motif lies at 9-19; that stretch reads PSPTGNLHIGT. Positions 248-252 match the 'KMSKS' region motif; sequence KLSKR. Lysine 251 is a binding site for ATP. A unknown region spans residues 481-881; sequence EIEDTKIEDT…IKREIFGKPS (401 aa). Basic and acidic residues predominate over residues 488 to 502; it reads EDTKKAETTPHKSKG. The tract at residues 488–747 is disordered; that stretch reads EDTKKAETTP…PTATDAETRE (260 aa). Residues 522–548 are compositionally biased toward low complexity; it reads QTQTTKPPKKGQTATPVATTPTATDVT. Residues 549–562 show a composition bias toward polar residues; the sequence is ENTSVGTQETQSQI. Over residues 563 to 576 the composition is skewed to low complexity; it reads TTPVATTPTATDVT. Residues 577 to 590 are compositionally biased toward polar residues; sequence ENTSVGTQETQSQI. Over residues 591 to 604 the composition is skewed to low complexity; sequence TTPVATTPTATDVT. Residues 605 to 618 show a composition bias toward polar residues; that stretch reads ENTSVETQETQSQI. A compositionally biased stretch (low complexity) spans 619–632; sequence TTPVATTPTATDVT. Over residues 633 to 646 the composition is skewed to polar residues; it reads ENTSVETQETQSQI. A compositionally biased stretch (low complexity) spans 647-660; sequence TTPVATTPTATDVT. Polar residues predominate over residues 661-674; the sequence is ENTSVGTQETQSQI. Low complexity predominate over residues 675-688; it reads TTPVATTPTATDVT. Residues 689-702 are compositionally biased toward polar residues; that stretch reads ENTSVETQETQSQI. Residues 703-720 show a composition bias toward low complexity; sequence TTPVATTSTATDVTENTS. The span at 721 to 730 shows a compositional bias: polar residues; sequence VETQETQSQI. Positions 731–742 are enriched in low complexity; sequence TTPVATTPTATD. 2 helical membrane passes run 809 to 829 and 832 to 852; these read LFGW…VIEA and GIPI…VWFV.

The protein belongs to the class-I aminoacyl-tRNA synthetase family. Glutamate--tRNA ligase type 1 subfamily. Monomer.

Its subcellular location is the cytoplasm. It is found in the cell membrane. It carries out the reaction tRNA(Glu) + L-glutamate + ATP = L-glutamyl-tRNA(Glu) + AMP + diphosphate. In terms of biological role, catalyzes the attachment of glutamate to tRNA(Glu) in a two-step reaction: glutamate is first activated by ATP to form Glu-AMP and then transferred to the acceptor end of tRNA(Glu). The chain is Glutamate--tRNA ligase (gltX) from Trichodesmium erythraeum (strain IMS101).